The chain runs to 116 residues: uncharacterized protein (116 aa).

Residues 6-60 (LKKCRKQKKLTQQNMADKLGITRPAYTAYELGSREPDYKTLINISNILDVSLDYL) form the HTH cro/C1-type domain. A DNA-binding region (H-T-H motif) is located at residues 17 to 36 (QQNMADKLGITRPAYTAYEL).

This is an uncharacterized protein from Bacillus subtilis (strain 168).